We begin with the raw amino-acid sequence, 594 residues long: Elongation factor 4 (594 aa).

Residues 2–184 (KNIRNFSIIA…TIVAKVPAPE (183 aa)) enclose the tr-type G domain. GTP contacts are provided by residues 14-19 (DHGKST) and 131-134 (NKID).

It belongs to the TRAFAC class translation factor GTPase superfamily. Classic translation factor GTPase family. LepA subfamily.

Its subcellular location is the cell inner membrane. It carries out the reaction GTP + H2O = GDP + phosphate + H(+). Functionally, required for accurate and efficient protein synthesis under certain stress conditions. May act as a fidelity factor of the translation reaction, by catalyzing a one-codon backward translocation of tRNAs on improperly translocated ribosomes. Back-translocation proceeds from a post-translocation (POST) complex to a pre-translocation (PRE) complex, thus giving elongation factor G a second chance to translocate the tRNAs correctly. Binds to ribosomes in a GTP-dependent manner. The chain is Elongation factor 4 from Francisella tularensis subsp. holarctica (strain FTNF002-00 / FTA).